Consider the following 426-residue polypeptide: Dihydropyrimidine dehydrogenase (NADP(+)), chloroplastic (426 aa).

The transit peptide at 1–44 (MASMSFALNRFSGLSSKTTLSADFDPSSRRSFLPPTRVGLKISS) directs the protein to the chloroplast. A45 is modified (N-acetylalanine). Residues N129 and 188–190 (NFS) contribute to the substrate site. The Nucleophile role is filled by C191. Position 256-257 (256-257 (NT)) interacts with substrate. Residues 395–414 (VEQRKAEKRGLKSDKDWTGD) are disordered.

It belongs to the dihydropyrimidine dehydrogenase family. Expressed in roots, leaves, stems, siliques and flowers. Highly expressed ion dry seeds.

The protein localises to the plastid. The protein resides in the chloroplast. It carries out the reaction 5,6-dihydrouracil + NADP(+) = uracil + NADPH + H(+). It functions in the pathway amino-acid biosynthesis; beta-alanine biosynthesis. Functionally, involved in pyrimidine base degradation. Catalyzes the reduction of uracil to 5,6-dihydrouracil (DHU) by using NADH as a specific cosubstrate and the reduction of thymine to 5,6-dihydrothymine (DHT). Involved in the recycling of nitrogen from nucleobases to general nitrogen metabolism. In Arabidopsis thaliana (Mouse-ear cress), this protein is Dihydropyrimidine dehydrogenase (NADP(+)), chloroplastic.